The chain runs to 224 residues: MGQKGCPVGFRTAVTKKWRSLWYGNNQEFGKFLIEDVKIREFLKKKPSCQGAAGFVVKRMSGKIEVTIHTARPGLVIGKKGAEVESLKAELKKLTGKDVWVEIAEVKRPELNAQLVADGIAKQIERRVSFRRAMKKALQSVMDAGALGVKVQVSGRLAGAEIARSEWYKNGRVPLHTLRADIDYATASAETTYGIIGIKVWINLGEKKAVPAANHAGAASTAAA.

The KH type-2 domain occupies 39-107; it reads IREFLKKKPS…DVWVEIAEVK (69 aa).

Belongs to the universal ribosomal protein uS3 family. In terms of assembly, part of the 30S ribosomal subunit. Forms a tight complex with proteins S10 and S14.

Its function is as follows. Binds the lower part of the 30S subunit head. Binds mRNA in the 70S ribosome, positioning it for translation. The protein is Small ribosomal subunit protein uS3 of Chlamydia trachomatis serovar L2 (strain ATCC VR-902B / DSM 19102 / 434/Bu).